The primary structure comprises 365 residues: Coxsackievirus and adenovirus receptor (365 aa).

An N-terminal signal peptide occupies residues 1–19; sequence MALLLCFVLLCGVVDFARS. Ig-like C2-type domains follow at residues 20–134 and 141–228; these read LSIT…KKIH and PSGA…LRLN. At 20 to 237 the chain is on the extracellular side; that stretch reads LSITTPEEMI…NVVPPSNKAG (218 aa). 2 disulfides stabilise this stretch: C41-C120 and C162-C212. Residues N106 and N201 are each glycosylated (N-linked (GlcNAc...) asparagine). A helical membrane pass occupies residues 238–258; the sequence is LIAGAIIGTLLALALIGLIIF. Residues C259 and C260 are each lipidated (S-palmitoyl cysteine). Residues 259–365 lie on the Cytoplasmic side of the membrane; it reads CCRKKRREEK…PAQSKDGSIV (107 aa). Over residues 269 to 282 the composition is skewed to basic and acidic residues; it reads YEKEVHHDIREDVP. The interval 269 to 343 is disordered; that stretch reads YEKEVHHDIR…TLPPAKVAAP (75 aa). Residues 286-322 show a composition bias toward polar residues; the sequence is SRTSTARSYIGSNHSSLGSMSPSNMEGYSKTQYNQVP. A phosphoserine mark is found at S297, S304, S306, S323, S332, and S363. The short motif at 360 to 365 is the PDZ-binding element; the sequence is KDGSIV.

Monomer. May form homodimer. Interacts with LNX, MAGI1, DLG4, PRKCABP, TJP1 and CTNNB1. Interacts with MPDZ; recruits MPDZ to intercellular contact sites. Interacts with JAML (homodimeric form). Secreted isoform 3, isoform 4 and isoform 5 can interact with the extracellular domain of the receptor. In terms of assembly, (Microbial infection) Interacts with adenovirus subgroups A, C, D, E and F fiber proteins as well as coxsackievirus B1, B2, B3, B4, B5 and B6 capsid proteins. In terms of processing, N-glycosylated. Post-translationally, palmitoylated on Cys-259 and/or Cys-260; required for proper localization to the plasma membrane. As to expression, expressed in pancreas, brain, heart, small intestine, testis, prostate and at a lower level in liver and lung. Isoform 5 is ubiquitously expressed. Isoform 3 is expressed in heart, lung and pancreas. In skeletal muscle, isoform 1 is found at the neuromuscular junction and isoform 2 is found in blood vessels. In cardiac muscle, isoform 1 and isoform 2 are found at intercalated disks. In heart expressed in subendothelial layers of the vessel wall but not in the luminal endothelial surface. Expression is elevated in hearts with dilated cardiomyopathy.

The protein resides in the cell membrane. It is found in the basolateral cell membrane. The protein localises to the cell junction. Its subcellular location is the tight junction. It localises to the adherens junction. The protein resides in the secreted. Component of the epithelial apical junction complex that may function as a homophilic cell adhesion molecule and is essential for tight junction integrity. Also involved in transepithelial migration of leukocytes through adhesive interactions with JAML a transmembrane protein of the plasma membrane of leukocytes. The interaction between both receptors also mediates the activation of gamma-delta T-cells, a subpopulation of T-cells residing in epithelia and involved in tissue homeostasis and repair. Upon epithelial CXADR-binding, JAML induces downstream cell signaling events in gamma-delta T-cells through PI3-kinase and MAP kinases. It results in proliferation and production of cytokines and growth factors by T-cells that in turn stimulate epithelial tissues repair. In terms of biological role, (Microbial infection) Acts as a receptor for adenovirus type C. Functionally, (Microbial infection) Acts as a receptor for Coxsackievirus B1 to B6. In Homo sapiens (Human), this protein is Coxsackievirus and adenovirus receptor (CXADR).